Here is a 198-residue protein sequence, read N- to C-terminus: Recombination protein RecR (198 aa).

Residues 57–72 (CSVCGHITDRDPCYIC) form a C4-type zinc finger. Positions 80-175 (SVVCVVQEPK…KVTRIAHGLP (96 aa)) constitute a Toprim domain.

The protein belongs to the RecR family.

Its function is as follows. May play a role in DNA repair. It seems to be involved in an RecBC-independent recombinational process of DNA repair. It may act with RecF and RecO. The chain is Recombination protein RecR from Bacillus anthracis (strain A0248).